Here is a 331-residue protein sequence, read N- to C-terminus: Phosphate acyltransferase (331 aa).

This sequence belongs to the PlsX family. In terms of assembly, homodimer. Probably interacts with PlsY.

It is found in the cytoplasm. It catalyses the reaction a fatty acyl-[ACP] + phosphate = an acyl phosphate + holo-[ACP]. The protein operates within lipid metabolism; phospholipid metabolism. Catalyzes the reversible formation of acyl-phosphate (acyl-PO(4)) from acyl-[acyl-carrier-protein] (acyl-ACP). This enzyme utilizes acyl-ACP as fatty acyl donor, but not acyl-CoA. The sequence is that of Phosphate acyltransferase from Lactococcus lactis subsp. lactis (strain IL1403) (Streptococcus lactis).